Consider the following 854-residue polypeptide: Envelope glycoprotein gp160 (854 aa).

The N-terminal stretch at 1 to 31 is a signal peptide; that stretch reads MKVMEKKKRDWNSLSIITIITIILLTPCLTS. Residues 32–675 lie on the Extracellular side of the membrane; sequence ELWVTVYYGV…ITKWLWYIKI (644 aa). Intrachain disulfides connect cysteine 53/cysteine 73, cysteine 118/cysteine 203, cysteine 125/cysteine 194, cysteine 130/cysteine 155, cysteine 216/cysteine 245, and cysteine 226/cysteine 237. The tract at residues 130-154 is V1; it reads CSKANFSQAKNLTNQTSSPPLEMKN. 7 N-linked (GlcNAc...) asparagine; by host glycosylation sites follow: asparagine 134, asparagine 140, asparagine 143, asparagine 154, asparagine 158, asparagine 186, and asparagine 195. Residues 155-194 are V2; that stretch reads CSFNVTTELRDKKKQVYSLFYVEDVVNLGNENNTYRIINC. Residues asparagine 239, asparagine 260, asparagine 267, asparagine 274, asparagine 299, asparagine 331, asparagine 336, asparagine 351, and asparagine 356 are each glycosylated (N-linked (GlcNAc...) asparagine; by host). The interval 294–327 is V3; the sequence is CHRPGNNTRGEVQIGPGMTFYNIENVVGDTRSAY. A disulfide bridge links cysteine 294 with cysteine 328. The CD4-binding loop stretch occupies residues 362-372; sequence ASGGDPEVTHH. Disulfide bonds link cysteine 376/cysteine 429 and cysteine 383/cysteine 402. Residues 383-402 form a V4 region; the sequence is CNTSQIFTDNITNGIIILPC. Asparagine 384, asparagine 392, asparagine 426, asparagine 432, asparagine 446, and asparagine 450 each carry an N-linked (GlcNAc...) asparagine; by host glycan. 2 V5 regions span residues 445 to 456 and 447 to 456; these read TNNSGNLTFRPT and NSGNLTFRPT. A fusion peptide region spans residues 501 to 522; sequence AAFGLGALFLGFLGAAGSTMGA. The tract at residues 564–582 is immunosuppression; that stretch reads KQLQARLLAVERYLQDQQI. A disulfide bridge links cysteine 588 with cysteine 594. Asparagine 601, asparagine 608, asparagine 616, and asparagine 628 each carry an N-linked (GlcNAc...) asparagine; by host glycan. Residues 624-658 adopt a coiled-coil conformation; sequence KLVSNYTGKIFGLLEEAQSQQEKNERDLLELDQWA. An MPER; binding to GalCer region spans residues 653–674; sequence ELDQWASLWNWFDITKWLWYIK. Residues 676-696 form a helical membrane-spanning segment; that stretch reads FLMAVGGIIGLRIIMTVFSVV. Residues 697 to 854 lie on the Cytoplasmic side of the membrane; it reads RRVRQGYSPL…IRQGLERALL (158 aa). The YXXL motif; contains endocytosis signal signature appears at 703–706; it reads YSPL. The Di-leucine internalization motif signature appears at 853–854; it reads LL.

The protein belongs to the HIV-1 env protein family. In terms of assembly, the mature envelope protein (Env) consists of a homotrimer of non-covalently associated gp120-gp41 heterodimers. The resulting complex protrudes from the virus surface as a spike. There seems to be as few as 10 spikes on the average virion. Interacts with host CD4, CCR5 and CXCR4. Gp120 also interacts with the C-type lectins CD209/DC-SIGN and CLEC4M/DC-SIGNR (collectively referred to as DC-SIGN(R)). Gp120 and gp41 interact with GalCer. Gp120 interacts with host ITGA4/ITGB7 complex; on CD4+ T-cells, this interaction results in rapid activation of integrin ITGAL/LFA-1, which facilitates efficient cell-to-cell spreading of HIV-1. Gp120 interacts with cell-associated heparan sulfate; this interaction increases virus infectivity on permissive cells and may be involved in infection of CD4- cells. As to quaternary structure, the mature envelope protein (Env) consists of a homotrimer of non-covalently associated gp120-gp41 heterodimers. The resulting complex protrudes from the virus surface as a spike. There seems to be as few as 10 spikes on the average virion. Highly glycosylated by host. The high number of glycan on the protein is reffered to as 'glycan shield' because it contributes to hide protein sequence from adaptive immune system. Post-translationally, palmitoylation of the transmembrane protein and of Env polyprotein (prior to its proteolytic cleavage) is essential for their association with host cell membrane lipid rafts. Palmitoylation is therefore required for envelope trafficking to classical lipid rafts, but not for viral replication. In terms of processing, specific enzymatic cleavages in vivo yield mature proteins. Envelope glycoproteins are synthesized as an inactive precursor that is heavily N-glycosylated and processed likely by host cell furin in the Golgi to yield the mature SU and TM proteins. The cleavage site between SU and TM requires the minimal sequence [KR]-X-[KR]-R. About 2 of the 9 disulfide bonds of gp41 are reduced by P4HB/PDI, following binding to CD4 receptor.

It localises to the virion membrane. The protein resides in the host cell membrane. It is found in the host endosome membrane. In terms of biological role, attaches the virus to the host lymphoid cell by binding to the primary receptor CD4. This interaction induces a structural rearrangement creating a high affinity binding site for a chemokine coreceptor like CXCR4 and/or CCR5. Acts as a ligand for CD209/DC-SIGN and CLEC4M/DC-SIGNR, which are respectively found on dendritic cells (DCs), and on endothelial cells of liver sinusoids and lymph node sinuses. These interactions allow capture of viral particles at mucosal surfaces by these cells and subsequent transmission to permissive cells. HIV subverts the migration properties of dendritic cells to gain access to CD4+ T-cells in lymph nodes. Virus transmission to permissive T-cells occurs either in trans (without DCs infection, through viral capture and transmission), or in cis (following DCs productive infection, through the usual CD4-gp120 interaction), thereby inducing a robust infection. In trans infection, bound virions remain infectious over days and it is proposed that they are not degraded, but protected in non-lysosomal acidic organelles within the DCs close to the cell membrane thus contributing to the viral infectious potential during DCs' migration from the periphery to the lymphoid tissues. On arrival at lymphoid tissues, intact virions recycle back to DCs' cell surface allowing virus transmission to CD4+ T-cells. Functionally, acts as a class I viral fusion protein. Under the current model, the protein has at least 3 conformational states: pre-fusion native state, pre-hairpin intermediate state, and post-fusion hairpin state. During fusion of viral and target intracellular membranes, the coiled coil regions (heptad repeats) assume a trimer-of-hairpins structure, positioning the fusion peptide in close proximity to the C-terminal region of the ectodomain. The formation of this structure appears to drive apposition and subsequent fusion of viral and target cell membranes. Complete fusion occurs in host cell endosomes and is dynamin-dependent, however some lipid transfer might occur at the plasma membrane. The virus undergoes clathrin-dependent internalization long before endosomal fusion, thus minimizing the surface exposure of conserved viral epitopes during fusion and reducing the efficacy of inhibitors targeting these epitopes. Membranes fusion leads to delivery of the nucleocapsid into the cytoplasm. Oligomerizes in the host endoplasmic reticulum into predominantly trimers. In a second time, gp160 transits in the host Golgi, where glycosylation is completed. The precursor is then proteolytically cleaved in the trans-Golgi and thereby activated by cellular furin or furin-like proteases to produce gp120 and gp41. The chain is Envelope glycoprotein gp160 from Pan (chimpanzees).